Reading from the N-terminus, the 157-residue chain is Transcriptional repressor NrdR (157 aa).

The tract at residues 1-26 (MRCPKCGGSKSSVIDSRQAEDGNTIR) is disordered. A zinc finger lies at 3–34 (CPKCGGSKSSVIDSRQAEDGNTIRRRRECEDC). Residues 17–26 (RQAEDGNTIR) show a composition bias toward basic and acidic residues. One can recognise an ATP-cone domain in the interval 49–139 (LVVVKKDGTR…VYRSFKDVGE (91 aa)).

The protein belongs to the NrdR family. Requires Zn(2+) as cofactor.

In terms of biological role, negatively regulates transcription of bacterial ribonucleotide reductase nrd genes and operons by binding to NrdR-boxes. This is Transcriptional repressor NrdR from Streptococcus gordonii (strain Challis / ATCC 35105 / BCRC 15272 / CH1 / DL1 / V288).